Reading from the N-terminus, the 507-residue chain is Maturase K (507 aa).

The protein belongs to the intron maturase 2 family. MatK subfamily.

The protein localises to the plastid. The protein resides in the chloroplast. Functionally, usually encoded in the trnK tRNA gene intron. Probably assists in splicing its own and other chloroplast group II introns. In Liriodendron tulipifera (Tuliptree), this protein is Maturase K.